A 234-amino-acid polypeptide reads, in one-letter code: Large ribosomal subunit protein uL1 (234 aa).

It belongs to the universal ribosomal protein uL1 family. As to quaternary structure, part of the 50S ribosomal subunit.

Its function is as follows. Binds directly to 23S rRNA. The L1 stalk is quite mobile in the ribosome, and is involved in E site tRNA release. In terms of biological role, protein L1 is also a translational repressor protein, it controls the translation of the L11 operon by binding to its mRNA. This is Large ribosomal subunit protein uL1 from Salmonella gallinarum (strain 287/91 / NCTC 13346).